The following is a 388-amino-acid chain: Succinate--CoA ligase [ADP-forming] subunit beta (388 aa).

One can recognise an ATP-grasp domain in the interval 9–244 (KEILRKYNVP…LDEEDPAEIE (236 aa)). ATP-binding positions include lysine 46, 53–55 (GRG), glutamate 99, alanine 102, and glutamate 107. Mg(2+) is bound by residues asparagine 199 and aspartate 213. Residues asparagine 264 and 321-323 (GIM) each bind substrate.

Belongs to the succinate/malate CoA ligase beta subunit family. In terms of assembly, heterotetramer of two alpha and two beta subunits. Mg(2+) serves as cofactor.

The enzyme catalyses succinate + ATP + CoA = succinyl-CoA + ADP + phosphate. It catalyses the reaction GTP + succinate + CoA = succinyl-CoA + GDP + phosphate. The protein operates within carbohydrate metabolism; tricarboxylic acid cycle; succinate from succinyl-CoA (ligase route): step 1/1. In terms of biological role, succinyl-CoA synthetase functions in the citric acid cycle (TCA), coupling the hydrolysis of succinyl-CoA to the synthesis of either ATP or GTP and thus represents the only step of substrate-level phosphorylation in the TCA. The beta subunit provides nucleotide specificity of the enzyme and binds the substrate succinate, while the binding sites for coenzyme A and phosphate are found in the alpha subunit. The protein is Succinate--CoA ligase [ADP-forming] subunit beta of Ralstonia pickettii (strain 12J).